The primary structure comprises 317 residues: tRNA dimethylallyltransferase (317 aa).

14–21 (GPTAVGKT) contacts ATP. A substrate-binding site is contributed by 16–21 (TAVGKT). Residues 39-42 (DSMQ) are interaction with substrate tRNA.

The protein belongs to the IPP transferase family. Monomer. Mg(2+) serves as cofactor.

The enzyme catalyses adenosine(37) in tRNA + dimethylallyl diphosphate = N(6)-dimethylallyladenosine(37) in tRNA + diphosphate. Functionally, catalyzes the transfer of a dimethylallyl group onto the adenine at position 37 in tRNAs that read codons beginning with uridine, leading to the formation of N6-(dimethylallyl)adenosine (i(6)A). This Bacillus cereus (strain AH187) protein is tRNA dimethylallyltransferase.